We begin with the raw amino-acid sequence, 120 residues long: Seripauperin-2 (120 aa).

Residues 7–24 form a helical membrane-spanning segment; that stretch reads IAAGVAAIAATASATTTL.

This sequence belongs to the SRP1/TIP1 family. Seripauperin subfamily.

It is found in the membrane. This Saccharomyces cerevisiae (strain ATCC 204508 / S288c) (Baker's yeast) protein is Seripauperin-2 (PAU2).